We begin with the raw amino-acid sequence, 664 residues long: Cytoskeleton-associated protein 2 (664 aa).

A disordered region spans residues 1–38; it reads MAESRKRFLGRAARNPLPVTRDLQLPPTRRDQPAFREQ. The span at 28-38 shows a compositional bias: basic and acidic residues; it reads TRRDQPAFREQ. The tract at residues 160 to 319 is association with alpha- and beta-tubulin; it reads PKQDSNVSKK…ASKDAARTDS (160 aa). Position 186 is a phosphoserine (Ser186). Disordered regions lie at residues 254-273, 283-328, 366-393, and 512-545; these read IRSL…SRPL, LDKE…MVKP, GKGK…NPVG, and AHAT…KVEV. The segment covering 300–309 has biased composition (polar residues); sequence GSSQAPSRSI. Residues 366–375 show a composition bias toward basic residues; sequence GKGKGLKRPP. Basic and acidic residues predominate over residues 533 to 545; that stretch reads PGEENEHHGKVEV. Thr561 is modified (phosphothreonine). The residue at position 577 (Ser577) is a Phosphoserine. Thr579 bears the Phosphothreonine mark. Phosphoserine is present on Ser584.

It belongs to the CKAP2 family. In terms of assembly, associates with alpha- and beta-tubulins.

The protein localises to the cytoplasm. The protein resides in the cytoskeleton. Its subcellular location is the spindle. It localises to the spindle pole. Possesses microtubule stabilizing properties. Involved in regulating aneuploidy, cell cycling, and cell death in a p53-dependent manner. The sequence is that of Cytoskeleton-associated protein 2 from Mus musculus (Mouse).